A 109-amino-acid polypeptide reads, in one-letter code: Mannose-specific lectin (109 aa).

The 85-residue stretch at 25 to 109 (MQEDCNLVLY…ARWATGTNIH (85 aa)) folds into the Bulb-type lectin domain. Alpha-D-mannopyranose-binding residues include Gln26, Asp28, Asn30, Tyr34, Asp37, Lys38, Trp41, Ala42, Asn44, Gln57, Asp59, Asn61, Tyr65, Ile72, Trp73, Asn76, Asn83, Gln89, Asp91, Asn93, Tyr97, and Trp102. Cys29 and Cys52 are joined by a disulfide.

Homotetramer; antiparallel. As to expression, detected in bulbs (at protein level).

Its subcellular location is the secreted. With respect to regulation, strongly inhibited by alpha-1,6-linked mannotriose. Inhibited by various oligosaccharides of P.pastoris mannan including, Man(alpha-l,6)Man-alpha-O-Me, Man(alpha-l,2)Man, Man(alpha-l,3)Man-alpha-O-Me, Man(alpha-l,2)Man, alpha-1,2-linked mannotriose, and Man(alpha-1,6)Glc, in order of decreasing potency. Weakly inhibited by elsinotetraose. Not inhibited by maltose or nigerose. In terms of biological role, D-mannose-binding lectin which binds alpha-D-linked mannose. Displays a high affinity for alpha-(1-6)-mannose oligomers. Able to interact with both terminal and internal alpha-D-mannosyl residues. Displays antiviral activity and therefore may contribute to defense against infections. The polypeptide is Mannose-specific lectin (Narcissus pseudonarcissus (Daffodil)).